The sequence spans 224 residues: MKKAVVLLSGGMDSAAVIALAQEQGFAVYALSVRYGQRHTSELDAAARVAAAQGVVAHKVVDVDLRSIGGSALTDDIDVPDAGGDGIPVTYVPARNTIMLSLALGWAEVVGANDLFCGVNAVDYSGYPDCRPEFVRAFEVLANLATKAGVEGVGLRVHAPLQFLSKADIVREGVRLGVDFGLTVSCYRADADGRACGHCDACRLRAAGFSDAGVPDPTHYAILS.

8 to 18 contributes to the ATP binding site; it reads LSGGMDSAAVI. 4 residues coordinate Zn(2+): cysteine 186, cysteine 196, cysteine 199, and cysteine 202.

The protein belongs to the QueC family. Zn(2+) serves as cofactor.

It catalyses the reaction 7-carboxy-7-deazaguanine + NH4(+) + ATP = 7-cyano-7-deazaguanine + ADP + phosphate + H2O + H(+). It participates in purine metabolism; 7-cyano-7-deazaguanine biosynthesis. Catalyzes the ATP-dependent conversion of 7-carboxy-7-deazaguanine (CDG) to 7-cyano-7-deazaguanine (preQ(0)). The sequence is that of 7-cyano-7-deazaguanine synthase from Xanthomonas euvesicatoria pv. vesicatoria (strain 85-10) (Xanthomonas campestris pv. vesicatoria).